Reading from the N-terminus, the 121-residue chain is Holin-like protein CidA (121 aa).

Transmembrane regions (helical) follow at residues 27 to 47 (VHLP…SLKF), 58 to 78 (GADF…VAVI), and 89 to 109 (IDLI…TGIL).

Belongs to the CidA/LrgA family. CidA subfamily.

Its subcellular location is the cell membrane. Increases the activity of extracellular murein hydrolases possibly by mediating their export via hole formation. Inhibited by the antiholin-like proteins LrgAB. In an unstressed cell, the LrgAB products probably inhibit the function of the CidA protein. When a cell is stressed by the addition of antibiotics or by other factors in the environment, CidA possibly oligomerizes within the bacterial cell membrane, creating lesions that disrupt the proton motive force, which in turn results in loss of cell viability. These lesions are also hypothesized to regulate the subsequent cell lysis by either allowing the murein hydrolases access to the cell wall substrate and/or regulating their activity by a possible change in the cell wall pH that results from loss of membrane potential. In Bacillus cytotoxicus (strain DSM 22905 / CIP 110041 / 391-98 / NVH 391-98), this protein is Holin-like protein CidA.